The chain runs to 673 residues: Outer spore wall assembly protein SHE10 (673 aa).

Residues 1 to 24 (MRRVRGVGNLLVTILVVLIGFKQA) form the signal peptide. Residues 503–568 (ILRSQANIAF…LALEQGQGQE (66 aa)) are a coiled coil. Disordered regions lie at residues 530 to 551 (LEQE…AENE) and 587 to 673 (TPLG…SQAN). Composition is skewed to acidic residues over residues 593–605 (DNTD…DDAD) and 612–629 (GDSE…EEDA). The stretch at 617–647 (NFYDSYEGDEEDASRELERLERESAERETLD) forms a coiled coil. Residues 630–673 (SRELERLERESAERETLDRLELGQRQKLQEEQHRDELHHSSQAN) are compositionally biased toward basic and acidic residues.

The protein belongs to the SHE10 family. Component of the mitochondria-localized RNase mitochondrial RNA-processing (RNase MRP) composed of one single RNA encoded by the NME1 gene and at least 31 proteins. Absent in the nucleus-localized RNase MRP (NuMRP).

Its subcellular location is the mitochondrion. Its function is as follows. Involved in spore wall assembly. May be a component of the mitochondrial RNase MRP (MtMRP), a ribonucleoprotein endoribonuclease involved in the cleaving RNA transcripts to generate primers for DNA replication in mitochondria. The polypeptide is Outer spore wall assembly protein SHE10 (Lachancea thermotolerans (strain ATCC 56472 / CBS 6340 / NRRL Y-8284) (Yeast)).